Here is a 90-residue protein sequence, read N- to C-terminus: Probable Fe(2+)-trafficking protein (90 aa).

The protein belongs to the Fe(2+)-trafficking protein family.

In terms of biological role, could be a mediator in iron transactions between iron acquisition and iron-requiring processes, such as synthesis and/or repair of Fe-S clusters in biosynthetic enzymes. The chain is Probable Fe(2+)-trafficking protein from Azoarcus sp. (strain BH72).